The primary structure comprises 388 residues: LL-diaminopimelate aminotransferase (388 aa).

Tyrosine 16 and glycine 41 together coordinate substrate. Residues tyrosine 70, 104–105, tyrosine 129, asparagine 179, tyrosine 210, and 239–241 contribute to the pyridoxal 5'-phosphate site; these read SK and SLS. Substrate is bound by residues lysine 105, tyrosine 129, and asparagine 179. Lysine 242 carries the post-translational modification N6-(pyridoxal phosphate)lysine. Pyridoxal 5'-phosphate is bound at residue arginine 250. Arginine 368 provides a ligand contact to substrate.

This sequence belongs to the class-I pyridoxal-phosphate-dependent aminotransferase family. LL-diaminopimelate aminotransferase subfamily. Homodimer. Pyridoxal 5'-phosphate serves as cofactor.

It carries out the reaction (2S,6S)-2,6-diaminopimelate + 2-oxoglutarate = (S)-2,3,4,5-tetrahydrodipicolinate + L-glutamate + H2O + H(+). Its pathway is amino-acid biosynthesis; L-lysine biosynthesis via DAP pathway; LL-2,6-diaminopimelate from (S)-tetrahydrodipicolinate (aminotransferase route): step 1/1. Its function is as follows. Involved in the synthesis of meso-diaminopimelate (m-DAP or DL-DAP), required for both lysine and peptidoglycan biosynthesis. Catalyzes the direct conversion of tetrahydrodipicolinate to LL-diaminopimelate. The protein is LL-diaminopimelate aminotransferase of Nitratidesulfovibrio vulgaris (strain ATCC 29579 / DSM 644 / CCUG 34227 / NCIMB 8303 / VKM B-1760 / Hildenborough) (Desulfovibrio vulgaris).